Here is a 285-residue protein sequence, read N- to C-terminus: 4-diphosphocytidyl-2-C-methyl-D-erythritol kinase (285 aa).

The active site involves Lys11. 93–103 (PLAAGLAGGSA) serves as a coordination point for ATP. Asp135 is a catalytic residue.

Belongs to the GHMP kinase family. IspE subfamily.

The enzyme catalyses 4-CDP-2-C-methyl-D-erythritol + ATP = 4-CDP-2-C-methyl-D-erythritol 2-phosphate + ADP + H(+). It participates in isoprenoid biosynthesis; isopentenyl diphosphate biosynthesis via DXP pathway; isopentenyl diphosphate from 1-deoxy-D-xylulose 5-phosphate: step 3/6. In terms of biological role, catalyzes the phosphorylation of the position 2 hydroxy group of 4-diphosphocytidyl-2C-methyl-D-erythritol. This chain is 4-diphosphocytidyl-2-C-methyl-D-erythritol kinase, found in Moorella thermoacetica (strain ATCC 39073 / JCM 9320).